The chain runs to 247 residues: Sugar fermentation stimulation protein homolog (247 aa).

Belongs to the SfsA family.

This is Sugar fermentation stimulation protein homolog from Oleidesulfovibrio alaskensis (strain ATCC BAA-1058 / DSM 17464 / G20) (Desulfovibrio alaskensis).